A 254-amino-acid chain; its full sequence is 14-3-3 protein 2 (254 aa).

The protein belongs to the 14-3-3 family. Homodimer.

The protein is 14-3-3 protein 2 (TFT2) of Solanum lycopersicum (Tomato).